Reading from the N-terminus, the 537-residue chain is Quadr-hydrophobin (537 aa).

Positions 1–17 (MKFITVAAALFASTSLA) are cleaved as a signal peptide. Hydrophobin stretches follow at residues 63–199 (GGNP…QNPI), 200–299 (GGNP…ENPT), 300–421 (GGNP…QDPL), and 422–537 (GGNP…RAII). 2 N-linked (GlcNAc...) asparagine glycosylation sites follow: N70 and N113. Intrachain disulfides connect C134-C183, C144-C174, C145-C157, C184-C195, C234-C283, C244-C274, C245-C257, C284-C295, C356-C405, C366-C396, C367-C379, C406-C417, C471-C520, C481-C511, C482-C494, and C521-C532.

It belongs to the cerato-ulmin hydrophobin family. Homotetramer. Further self-assembles to form highly ordered films at water-air interfaces through intermolecular interactions.

The protein localises to the secreted. Its subcellular location is the cell wall. Functionally, aerial growth, conidiation, and dispersal of filamentous fungi in the environment rely upon a capability of their secreting small amphipathic proteins called hydrophobins (HPBs) with low sequence identity. Class I can self-assemble into an outermost layer of rodlet bundles on aerial cell surfaces, conferring cellular hydrophobicity that supports fungal growth, development and dispersal; whereas Class II form highly ordered films at water-air interfaces through intermolecular interactions but contribute nothing to the rodlet structure. The polypeptide is Quadr-hydrophobin (Cordyceps militaris (Caterpillar fungus)).